The primary structure comprises 621 residues: Leucine aminopeptidase (621 aa).

The propeptide occupies 1–73 (MPLLRSSQHI…ISNRKEFRKM (73 aa)). The disordered stretch occupies residues 129–152 (SSSGGSGGNGGSAGSSGNGEGGAQ). The segment covering 132 to 150 (GGSGGNGGSAGSSGNGEGG) has biased composition (gly residues). Residues Lys-390, Asp-395, and Lys-402 each coordinate a peptide. Residues Lys-390 and Asp-395 each coordinate Zn(2+). Positions 400-417 (NLKAAPGSMIDLMKFDMS) are L13 loop. Residue Lys-402 is part of the active site. Zn(2+) is bound by residues Asp-410, Met-412, Asp-415, Asp-475, and Glu-477. The a peptide site is built by Asp-415 and Asp-475. Arg-479 is an active-site residue.

The protein belongs to the peptidase M17 family. Homohexamer composed of dimer of trimers. Both the identity and concentration of metal ions available dictate the extent to which oligomerization occurs; Mn(2+) and Co(2+) induces oligomerization, whereas Mg(2+) has no effect, and Zn(2+) causes irreversible protein aggregation in vitro. It depends on Zn(2+) as a cofactor.

Its subcellular location is the cytoplasm. The catalysed reaction is Release of an N-terminal amino acid, Xaa-|-Yaa-, in which Xaa is preferably Leu, but may be other amino acids including Pro although not Arg or Lys, and Yaa may be Pro. Amino acid amides and methyl esters are also readily hydrolyzed, but rates on arylamides are exceedingly low.. The enzyme catalyses L-cysteinylglycine + H2O = L-cysteine + glycine. With respect to regulation, oligomerization is required for catalytic activity and is metal-dependent. The type of metal that binds the 2 metal binding sites influences catalytic activity and substrate specificity. In vitro, activated by Co(2+), Mn(2+), Ni(2+), Mg(2+) and Zn(2+) with decreasing strength. Occupancy of the site 2 is essential and sufficient for activating the enzyme but occupation of the 2 sites is necessary for full catalytic activity. Inhibited by Ca(2+). Inhibited by fungal metabolite bestatin. In terms of biological role, aminopeptidase which preferentially cleaves leucine residues from the N-terminus of peptides. Also, has some activity towards tryptophan and methionine and has very low activity towards alanine, arginine, asparagine, phenylalanine and tyrosine. No activity towards histidine, serine, valine, isoleucine, glycine, aspartic acid and glutamic acid. In addition, cleaves the Cys-Gly dipeptide, probably as part of the glutathione regulation pathway; cleavage only occurs in the presence of Mn(2+). Plays a role in the final step of host hemoglobin catabolism, by cleaving hemoglobin-derived oligopeptides providing a source of amino acids for the parasite protein synthesis and for the maintenance of osmotic homeostasis. This Plasmodium vivax (strain Salvador I) protein is Leucine aminopeptidase.